Consider the following 720-residue polypeptide: Zinc finger protein 408 (720 aa).

The disordered stretch occupies residues 201–350 (VQQEVASPGE…GPAGSSPKQG (150 aa)). Positions 275–285 (LQSNSATQQDP) are enriched in polar residues. Positions 287–296 (GSGASFSSSA) are enriched in low complexity. Thr-322 carries the phosphothreonine modification. 10 consecutive C2H2-type zinc fingers follow at residues 353–375 (YRCG…AFVH), 381–403 (FLCT…MLGH), 409–431 (FPCP…QVVH), 437–459 (FACD…RKTH), 468–490 (CPCP…MRLH), 496–518 (FLCP…LRLH), 524–546 (YRCP…LISH), 551–573 (HLCP…ERLH), 579–601 (FPCP…LKSH), and 607–629 (YRCP…QLSH).

Highest expression is observed in adult retina; abundantly expressed in the fetal eye. In the retina, it is detected in the outer nuclear layer, especially cone and rod photoreceptor cells, ganglion cell layer and both outer and inner plexiform layers (at protein level). Expressed in retinal blood vessels (at protein level).

The protein resides in the nucleus. Functionally, may be involved in transcriptional regulation. The protein is Zinc finger protein 408 (ZNF408) of Homo sapiens (Human).